The primary structure comprises 239 residues: DNA repair protein RecO (239 aa).

The protein belongs to the RecO family.

Functionally, involved in DNA repair and RecF pathway recombination. The chain is DNA repair protein RecO from Christiangramia forsetii (strain DSM 17595 / CGMCC 1.15422 / KT0803) (Gramella forsetii).